A 93-amino-acid polypeptide reads, in one-letter code: Exodeoxyribonuclease 7 small subunit (93 aa).

Over residues 1-17 (MAKSSASSLSSAKPVAA) the composition is skewed to low complexity. The interval 1–22 (MAKSSASSLSSAKPVAAGPDAS) is disordered.

It belongs to the XseB family. In terms of assembly, heterooligomer composed of large and small subunits.

It localises to the cytoplasm. It carries out the reaction Exonucleolytic cleavage in either 5'- to 3'- or 3'- to 5'-direction to yield nucleoside 5'-phosphates.. Functionally, bidirectionally degrades single-stranded DNA into large acid-insoluble oligonucleotides, which are then degraded further into small acid-soluble oligonucleotides. In Polaromonas naphthalenivorans (strain CJ2), this protein is Exodeoxyribonuclease 7 small subunit.